We begin with the raw amino-acid sequence, 234 residues long: uncharacterized protein (234 aa).

Residue 68–70 participates in L-glutamine binding; it reads GES. The active-site Nucleophile is cysteine 101. L-glutamine-binding positions include arginine 131 and 167 to 168; that span reads IR. Catalysis depends on charge relay system residues histidine 208 and glutamate 210.

This sequence belongs to the glutaminase PdxT/SNO family.

It is found in the cytoplasm. The catalysed reaction is L-glutamine + H2O = L-glutamate + NH4(+). This is an uncharacterized protein from Schizosaccharomyces pombe (strain 972 / ATCC 24843) (Fission yeast).